The primary structure comprises 326 residues: tRNA-modifying protein YgfZ (326 aa).

The folate site is built by W27 and W189.

Belongs to the tRNA-modifying YgfZ family.

The protein resides in the cytoplasm. In terms of biological role, folate-binding protein involved in regulating the level of ATP-DnaA and in the modification of some tRNAs. It is probably a key factor in regulatory networks that act via tRNA modification, such as initiation of chromosomal replication. The sequence is that of tRNA-modifying protein YgfZ from Escherichia coli O6:K15:H31 (strain 536 / UPEC).